Here is a 61-residue protein sequence, read N- to C-terminus: UPF0391 membrane protein Ajs_0703 (61 aa).

A run of 2 helical transmembrane segments spans residues 5–25 and 33–53; these read AIIFAIISLIAGALGFTGVAA and VLFVVFLVLAVLFVVLALLGI.

This sequence belongs to the UPF0391 family.

It is found in the cell membrane. This Acidovorax sp. (strain JS42) protein is UPF0391 membrane protein Ajs_0703.